Here is a 406-residue protein sequence, read N- to C-terminus: Peptidase T (406 aa).

H81 serves as a coordination point for Zn(2+). D83 is an active-site residue. D142 contacts Zn(2+). Residue E176 is the Proton acceptor of the active site. Residues E177, D199, and H381 each coordinate Zn(2+).

The protein belongs to the peptidase M20B family. It depends on Zn(2+) as a cofactor.

It is found in the cytoplasm. It catalyses the reaction Release of the N-terminal residue from a tripeptide.. Its function is as follows. Cleaves the N-terminal amino acid of tripeptides. This is Peptidase T from Streptococcus suis (strain 98HAH33).